Reading from the N-terminus, the 198-residue chain is Nucleoside triphosphate pyrophosphatase (198 aa).

The Proton acceptor role is filled by Asp75.

It belongs to the Maf family. Requires a divalent metal cation as cofactor.

It is found in the cytoplasm. It catalyses the reaction a ribonucleoside 5'-triphosphate + H2O = a ribonucleoside 5'-phosphate + diphosphate + H(+). The enzyme catalyses a 2'-deoxyribonucleoside 5'-triphosphate + H2O = a 2'-deoxyribonucleoside 5'-phosphate + diphosphate + H(+). Functionally, nucleoside triphosphate pyrophosphatase. May have a dual role in cell division arrest and in preventing the incorporation of modified nucleotides into cellular nucleic acids. This chain is Nucleoside triphosphate pyrophosphatase, found in Hyphomonas neptunium (strain ATCC 15444).